A 212-amino-acid chain; its full sequence is uncharacterized protein (212 aa).

The first 18 residues, 1–18 (MIPLVALLVLLTLQASPG), serve as a signal peptide directing secretion. The chain crosses the membrane as a helical span at residues 186–208 (IYRLATFFMVSLFVGSFVALVFV).

The protein to A.fulgidus AF_0540.

It is found in the membrane. This is an uncharacterized protein from Archaeoglobus fulgidus (strain ATCC 49558 / DSM 4304 / JCM 9628 / NBRC 100126 / VC-16).